A 355-amino-acid chain; its full sequence is Probable butyrate kinase (355 aa).

The protein belongs to the acetokinase family.

The protein resides in the cytoplasm. It catalyses the reaction butanoate + ATP = butanoyl phosphate + ADP. In Listeria innocua serovar 6a (strain ATCC BAA-680 / CLIP 11262), this protein is Probable butyrate kinase.